The sequence spans 636 residues: DNA-directed RNA polymerase subunit gamma (636 aa).

Residues cysteine 71, cysteine 73, cysteine 86, and cysteine 89 each contribute to the Zn(2+) site. 3 residues coordinate Mg(2+): aspartate 467, aspartate 469, and aspartate 471.

The protein belongs to the RNA polymerase beta' chain family. RpoC1 subfamily. As to quaternary structure, in cyanobacteria the RNAP catalytic core is composed of 2 alpha, 1 beta, 1 beta', 1 gamma and 1 omega subunit. When a sigma factor is associated with the core the holoenzyme is formed, which can initiate transcription. Requires Mg(2+) as cofactor. Zn(2+) serves as cofactor.

It carries out the reaction RNA(n) + a ribonucleoside 5'-triphosphate = RNA(n+1) + diphosphate. Its function is as follows. DNA-dependent RNA polymerase catalyzes the transcription of DNA into RNA using the four ribonucleoside triphosphates as substrates. The sequence is that of DNA-directed RNA polymerase subunit gamma from Picosynechococcus sp. (strain ATCC 27264 / PCC 7002 / PR-6) (Agmenellum quadruplicatum).